Consider the following 280-residue polypeptide: Para-Rep C2 (280 aa).

The 97-residue stretch at 1 to 97 folds into the CRESS-DNA virus Rep endonuclease domain; it reads MARRYCFTLN…ETLISEIGIP (97 aa). The short motif at 6 to 9 is the RCR-1 element; it reads CFTL. Residues Glu37 and His45 each contribute to the a divalent metal cation site. The RCR-2 signature appears at 45–47; it reads HLQ. Positions 54-75 match the Nuclear localization signal motif; sequence NKIRLGGLKKKFGNRAHWEIAR. Tyr84 acts as the For DNA cleavage activity in catalysis. The RCR-3 signature appears at 84 to 87; sequence YCCK. Positions 97-103 match the Nuclear localization signal motif; the sequence is PVMKGSN. ATP is bound at residue 172-180; sequence GSDGGEGKT.

It belongs to the nanoviridea/circoviridae replication-associated protein family. Homooligomer (Potential). Rep binds to repeated DNA motifs (iterons). Mg(2+) is required as a cofactor. The cofactor is Mn(2+).

The protein localises to the host nucleus. The catalysed reaction is ATP + H2O = ADP + phosphate + H(+). Its function is as follows. Initiates and terminates the replication only of its own subviral DNA molecule. The closed circular ssDNA genome is first converted to a superhelical dsDNA. Rep binds a specific hairpin at the genome origin of replication. Introduces an endonucleolytic nick within the intergenic region of the genome, thereby initiating the rolling circle replication (RCR). Following cleavage, binds covalently to the 5'-phosphate of DNA as a tyrosyl ester. The cleavage gives rise to a free 3'-OH that serves as a primer for the cellular DNA polymerase. The polymerase synthesizes the (+) strand DNA by rolling circle mechanism. After one round of replication, a Rep-catalyzed nucleotidyl transfer reaction releases a circular single-stranded virus genome, thereby terminating the replication. Displays origin-specific DNA cleavage, nucleotidyl transferase, ATPase and helicase activities. In Subterranean clover stunt C2 alphasatellite (SCSC2A), this protein is Para-Rep C2 (C2).